Consider the following 336-residue polypeptide: Protein-lysine N-methyltransferase EFM3 (336 aa).

S-adenosyl-L-methionine-binding positions include Trp147, Gly173–Gly175, Asp196, Leu232, and Ala251.

The protein belongs to the class I-like SAM-binding methyltransferase superfamily. EEF2KMT family.

The protein resides in the cytoplasm. S-adenosyl-L-methionine-dependent protein-lysine N-methyltransferase that methylates elongation factor 2. This Chaetomium thermophilum (strain DSM 1495 / CBS 144.50 / IMI 039719) (Thermochaetoides thermophila) protein is Protein-lysine N-methyltransferase EFM3.